Reading from the N-terminus, the 342-residue chain is Heat-inducible transcription repressor HrcA (342 aa).

It belongs to the HrcA family.

In terms of biological role, negative regulator of class I heat shock genes (grpE-dnaK-dnaJ and groELS operons). Prevents heat-shock induction of these operons. In Onion yellows phytoplasma (strain OY-M), this protein is Heat-inducible transcription repressor HrcA.